The primary structure comprises 86 residues: Beta-toxin To4 (86 aa).

The first 20 residues, 1 to 20 (MTRFVLFISCFFLIGMIVEC), serve as a signal peptide directing secretion. The region spanning 21–83 (KDGYLMEYGG…IWNRATNKCG (63 aa)) is the LCN-type CS-alpha/beta domain. 4 cysteine pairs are disulfide-bonded: C31–C82, C35–C57, C43–C63, and C47–C65. At C82 the chain carries Cysteine amide.

Belongs to the long (4 C-C) scorpion toxin superfamily. Sodium channel inhibitor family. Beta subfamily. In terms of tissue distribution, expressed by the venom gland.

Its subcellular location is the secreted. In terms of biological role, beta toxins bind voltage-independently at site-4 of sodium channels (Nav) and shift the voltage of activation toward more negative potentials thereby affecting sodium channel activation and promoting spontaneous and repetitive firing. This toxin shows moderate inhibition of Nav1.1/SCN1A, Nav1.2/SCN2A, and Nav1.4/SCN4A, and promotes a left voltage shift on these channels. It exhibits similar potency on Nav1.2/SCN2A and Nav1.4/SCN4A (40-50% peak current inhibition at 0.5 uM), and weaker inhibition on Nav1.2 (20-30% peak current inhibition at 0.5 uM). The protein is Beta-toxin To4 of Tityus obscurus (Amazonian scorpion).